The following is a 468-amino-acid chain: 6-phospho-beta-galactosidase (468 aa).

Residues Gln19, His116, Asn159, Glu160, and Asn297 each coordinate D-galactose 6-phosphate. The active-site Proton donor is the Glu160. Glu375 (nucleophile) is an active-site residue. Residues Ser428, Trp429, Lys435, and Tyr437 each coordinate D-galactose 6-phosphate.

Belongs to the glycosyl hydrolase 1 family.

The catalysed reaction is a 6-phospho-beta-D-galactoside + H2O = D-galactose 6-phosphate + an alcohol. It functions in the pathway carbohydrate metabolism; lactose degradation; D-galactose 6-phosphate and beta-D-glucose from lactose 6-phosphate: step 1/1. This Streptococcus pyogenes serotype M12 (strain MGAS2096) protein is 6-phospho-beta-galactosidase.